Reading from the N-terminus, the 221-residue chain is Phosphoglycolate phosphatase (221 aa).

The active-site Nucleophile is the Asp-7. Mg(2+) is bound by residues Asp-7 and Asp-9. Position 148 (Lys-148) interacts with substrate. Asp-171 and Asp-175 together coordinate Mg(2+).

Belongs to the archaeal SPP-like hydrolase family. The cofactor is Mg(2+).

The catalysed reaction is 2-phosphoglycolate + H2O = glycolate + phosphate. Its function is as follows. Catalyzes the dephosphorylation of 2-phosphoglycolate. This Methanothermobacter thermautotrophicus (strain ATCC 29096 / DSM 1053 / JCM 10044 / NBRC 100330 / Delta H) (Methanobacterium thermoautotrophicum) protein is Phosphoglycolate phosphatase.